The following is a 138-amino-acid chain: Transcription antitermination protein NusB (138 aa).

This sequence belongs to the NusB family.

Functionally, involved in transcription antitermination. Required for transcription of ribosomal RNA (rRNA) genes. Binds specifically to the boxA antiterminator sequence of the ribosomal RNA (rrn) operons. The polypeptide is Transcription antitermination protein NusB (Helicobacter pylori (strain J99 / ATCC 700824) (Campylobacter pylori J99)).